Consider the following 112-residue polypeptide: WRMIWEHECCVIAVLTRLTEKKKVKCAQYWSETDNKSSKYGEITVKLRETSSCGDYVRRQFELTKNNMTREVVQFQFIAWPDHGIPVTTSSLFRFHKAVVFSQPHTAGPIVV.

The Tyrosine-protein phosphatase domain occupies 1–112; sequence WRMIWEHECC…QPHTAGPIVV (112 aa). Aspartate 82 is a binding site for substrate.

Belongs to the protein-tyrosine phosphatase family.

It catalyses the reaction O-phospho-L-tyrosyl-[protein] + H2O = L-tyrosyl-[protein] + phosphate. The chain is Tyrosine-protein phosphatase 17 (STY-17) from Styela plicata (Wrinkled sea squirt).